Reading from the N-terminus, the 297-residue chain is PDZ domain-containing protein GIPC3 (297 aa).

One can recognise a PDZ domain in the interval 97 to 177 (EVEVTKTEDA…SQPFTLRLVQ (81 aa)).

Belongs to the GIPC family. As to expression, expressed in adult lung, brain and testis. In the inner ear, it is expressed in the inner and outer hair cells of the organ of Corti. Also expressed in cochlear spiral ganglion neurons.

Functionally, required for postnatal maturation of the hair bundle and long-term survival of hair cells and spiral ganglion. The protein is PDZ domain-containing protein GIPC3 (Gipc3) of Mus musculus (Mouse).